Consider the following 346-residue polypeptide: fMet-Leu-Phe receptor (346 aa).

Residues Asn1 and Asn7 are each glycosylated (N-linked (GlcNAc...) asparagine). Residues 1 to 24 (NSSLPTNISGGTPAVSAGYLFLDI) are Extracellular-facing. A helical membrane pass occupies residues 25-47 (ITYLVFAVTFVLGVLGNGLVIWV). Topologically, residues 48 to 58 (AGFRMTHTVTT) are cytoplasmic. Residues 59 to 80 (ISYLNLAVADFCFTSTLPFFMV) form a helical membrane-spanning segment. The Extracellular portion of the chain corresponds to 81–97 (RKAMGGHWPFGWFLCKF). A disulfide bond links Cys95 and Cys173. A helical membrane pass occupies residues 98–118 (IFTIVDINLFGSVFLIALIAL). Over 119-137 (DRCVCVLHPVWTQNHRTVS) the chain is Cytoplasmic. The chain crosses the membrane as a helical span at residues 138–159 (LAKKVIIGPWVMALLLTLPVII). Residues 160–202 (RVTTVPGKTGTVACTFNFSPWTNDPKERINVAIAMLTVRGIIR) are Extracellular-facing. Residues 203 to 223 (FIIGFSAPMSIVAVSYGLIAT) form a helical membrane-spanning segment. The Cytoplasmic portion of the chain corresponds to 224-239 (KIHKQGLIKFSRPLRV). Residues 240–263 (LSFVAAAFFLCWSPYQVVALIATV) traverse the membrane as a helical segment. Topologically, residues 264 to 282 (RIRELLQGMYKEIGIAVDV) are extracellular. Residues 283–302 (TSALAFFNSCLNPMLYVFMG) form a helical membrane-spanning segment. Topologically, residues 303-346 (QDFRERLIHALPASLERALTEDSTQTSDTATNSTLPSAEVALQA) are cytoplasmic. Positions 322–346 (TEDSTQTSDTATNSTLPSAEVALQA) are disordered. A compositionally biased stretch (polar residues) spans 323–338 (EDSTQTSDTATNSTLP).

This sequence belongs to the G-protein coupled receptor 1 family. Phosphorylated; which is necessary for desensitization.

Its subcellular location is the cell membrane. Its function is as follows. High affinity receptor for N-formyl-methionyl peptides (fMLP), which are powerful neutrophil chemotactic factors. Binding of fMLP to the receptor stimulates intracellular calcium mobilization and superoxide anion release. This response is mediated via a G-protein that activates a phosphatidylinositol-calcium second messenger system. Receptor for TAFA4, mediates its effects on chemoattracting macrophages, promoting phagocytosis and increasing ROS release. Receptor for cathepsin CTSG, leading to increased phagocyte chemotaxis. This is fMet-Leu-Phe receptor (FPR1) from Pan troglodytes (Chimpanzee).